Here is a 523-residue protein sequence, read N- to C-terminus: Cryptochrome DASH (523 aa).

Residues Arg-6 to Leu-142 enclose the Photolyase/cryptochrome alpha/beta domain. Disordered regions lie at residues Arg-174–Arg-211 and Lys-486–Val-523. Over residues Arg-496–Asn-510 the composition is skewed to basic residues.

This sequence belongs to the DNA photolyase class-1 family. The cofactor is FAD. It depends on (6R)-5,10-methylene-5,6,7,8-tetrahydrofolate as a cofactor.

May have a photoreceptor function. Has weak cyclobutyl pyrimidine photolyase activity when expressed in E.coli and when tested in vitro. The protein is Cryptochrome DASH (cry-dash) of Xenopus laevis (African clawed frog).